The primary structure comprises 329 residues: Malate dehydrogenase (329 aa).

Residue 12–18 participates in NAD(+) binding; it reads GAAGQIG. Positions 95 and 101 each coordinate substrate. Residues N108, Q115, and 132 to 134 each bind NAD(+); that span reads VGN. N134 and R165 together coordinate substrate. The active-site Proton acceptor is H190.

This sequence belongs to the LDH/MDH superfamily. MDH type 2 family.

It catalyses the reaction (S)-malate + NAD(+) = oxaloacetate + NADH + H(+). Functionally, catalyzes the reversible oxidation of malate to oxaloacetate. This Bordetella petrii (strain ATCC BAA-461 / DSM 12804 / CCUG 43448) protein is Malate dehydrogenase.